The chain runs to 73 residues: Disintegrin lutosin (73 aa).

One can recognise a Disintegrin domain in the interval 1 to 73 (EAGEECDCGS…ADCPRNGLYG (73 aa)). Cystine bridges form between Cys6-Cys21, Cys8-Cys16, Cys15-Cys38, Cys29-Cys35, Cys34-Cys59, and Cys47-Cys66. Residues 51-53 (RGD) carry the Cell attachment site motif.

It belongs to the venom metalloproteinase (M12B) family. P-II subfamily. P-IIa sub-subfamily. Monomer (disintegrin). In terms of tissue distribution, expressed by the venom gland.

The protein localises to the secreted. Its function is as follows. Inhibits fibrinogen interaction with platelets. Acts by binding to alpha-IIb/beta-3 (ITGA2B/ITGB3) on the platelet surface and inhibits aggregation induced by ADP, thrombin, platelet-activating factor and collagen. In Crotalus lutosus (Great basin rattlesnake), this protein is Disintegrin lutosin.